The primary structure comprises 398 residues: Tryptophan synthase beta chain (398 aa).

Lys-88 carries the N6-(pyridoxal phosphate)lysine modification.

The protein belongs to the TrpB family. Tetramer of two alpha and two beta chains. Pyridoxal 5'-phosphate serves as cofactor.

The catalysed reaction is (1S,2R)-1-C-(indol-3-yl)glycerol 3-phosphate + L-serine = D-glyceraldehyde 3-phosphate + L-tryptophan + H2O. It participates in amino-acid biosynthesis; L-tryptophan biosynthesis; L-tryptophan from chorismate: step 5/5. The beta subunit is responsible for the synthesis of L-tryptophan from indole and L-serine. This chain is Tryptophan synthase beta chain, found in Haemophilus influenzae (strain PittGG).